A 920-amino-acid chain; its full sequence is MSYNRLGESYGEDDHSHSPMMNPHQTNNRSPSPGRPLNAYQLSDVSYGPQERLHMPSSDLLAEQPTYSVERLPNSYGHNEAYEQHHQQSYPGYEYAVDPEAHHDAYYTQPYQPTVTPHDDYDLGQYPEHQHQHSYSDDRIPMLQQDNPFGPDPYSDEYQVEEQADGHTPSPAPIRRWKTVKEVQLFNGNLVLDCPIAPKLLNQVPHAEPPGRDEFTHMRYSAATCDPNDFFEERFTLRQKLFAKPRHTELFIVVTMYNEDDFLFARTLIGVFKNIEHMCSRTHSKTWGKDAWKKIVVCVISDGRAKINPRTRAVLAALGVYQDGIAKQQVNGKDVTAHIYEYTTQIALELKGTQVQIKGRSAVPVQMIFCLKEKNQKKINSHRWFFQAFGRVLDPNICVLLDAGTKPGKDSIYRLWKAFDVEPMCGGACGEIKVMLSHGKKLLNPLVAGQNFEYKLSNILDKPMESAFGFISVLPGAFSAYRFVALQNDKNGQGPLERYFLGEKMHGANAGIFTANMYLAEDRILCFEIVTKRNCRWLLQYVKSSTGETDVPDQMAEFILQRRRWLNGSFFAAVYAIAHFYQIWRSDHSAIRKFALLIEFFYQTINMLFAWFGIGNFFLVFHILTTYLGQKDLLGTTGKVLGVVFEWLYLATLVTCFVLALGNRPGGSNKFYMTMVYFWIGIMIYLAFACIFVTVKSIQTEVQQDGFTFTDLFTNSTFFTIIVSLGSTYVMWFVASIIFLDPWHMFTSFIQYILLTPTYINVLNIYAFCNTHDITWGTKGDDKAEKLPSANLKPGGKVDVDIPQDDGDLNAQYDTELAKFAEKPPKEVQVISEEERQADYYKGFRSAVVLAWVFCNFALGAVVLSAAGLDRFDQSEKTSEDSNKRSTIYMAVVLWSVAGLSIFKFIGALWYLVVRMFRGV.

2 disordered regions span residues 1–41 and 140–173; these read MSYN…NAYQ and IPML…SPAP. Residues 154-163 are compositionally biased toward acidic residues; the sequence is YSDEYQVEEQ. 5 helical membrane-spanning segments follow: residues 466 to 486, 564 to 584, 608 to 628, 640 to 660, and 675 to 695; these read SAFG…FVAL, RWLN…YQIW, LFAW…TTYL, VLGV…FVLA, and MVYF…FVTV. N-linked (GlcNAc...) asparagine glycosylation occurs at N715. Transmembrane regions (helical) follow at residues 718–738, 749–769, 847–867, and 892–912; these read FFTI…ASII, FIQY…YAFC, AVVL…LSAA, and VVLW…LWYL.

The protein belongs to the chitin synthase family. Class I subfamily.

The protein resides in the cell membrane. The catalysed reaction is [(1-&gt;4)-N-acetyl-beta-D-glucosaminyl](n) + UDP-N-acetyl-alpha-D-glucosamine = [(1-&gt;4)-N-acetyl-beta-D-glucosaminyl](n+1) + UDP + H(+). Polymerizes chitin, a structural polymer of the cell wall and septum, by transferring the sugar moiety of UDP-GlcNAc to the non-reducing end of the growing chitin polymer. Involved in hyphal growth. This chain is Chitin synthase C, found in Aspergillus oryzae (strain ATCC 42149 / RIB 40) (Yellow koji mold).